Reading from the N-terminus, the 494-residue chain is Cytochrome P450 2C23 (494 aa).

Phosphoserine is present on Ser131. Residues Lys253 and Lys379 each carry the N6-acetyllysine modification. Residue Cys439 participates in heme binding.

Belongs to the cytochrome P450 family. The cofactor is heme. In terms of tissue distribution, expressed in kidney and liver. Expressed in cortical tubules of kidney (at protein level).

Its subcellular location is the endoplasmic reticulum membrane. It is found in the microsome membrane. The enzyme catalyses (5Z,8Z,11Z,14Z)-eicosatetraenoate + reduced [NADPH--hemoprotein reductase] + O2 = (8R,9S)-epoxy-(5Z,11Z,14Z)-eicosatrienoate + oxidized [NADPH--hemoprotein reductase] + H2O + H(+). It catalyses the reaction (5Z,8Z,11Z,14Z)-eicosatetraenoate + reduced [NADPH--hemoprotein reductase] + O2 = (11R,12S)-epoxy-(5Z,8Z,14Z)-eicosatrienoate + oxidized [NADPH--hemoprotein reductase] + H2O + H(+). The catalysed reaction is (5Z,8Z,11Z,14Z)-eicosatetraenoate + reduced [NADPH--hemoprotein reductase] + O2 = (11S,12R)-epoxy-(5Z,8Z,14Z)-eicosatrienoate + oxidized [NADPH--hemoprotein reductase] + H2O + H(+). It carries out the reaction (5Z,8Z,11Z,14Z)-eicosatetraenoate + reduced [NADPH--hemoprotein reductase] + O2 = (14R,15S)-epoxy-(5Z,8Z,11Z)-eicosatrienoate + oxidized [NADPH--hemoprotein reductase] + H2O + H(+). The enzyme catalyses (5Z,8Z,11Z,14Z)-eicosatetraenoate + reduced [NADPH--hemoprotein reductase] + O2 = (14S,15R)-epoxy-(5Z,8Z,11Z)-eicosatrienoate + oxidized [NADPH--hemoprotein reductase] + H2O + H(+). It catalyses the reaction (5Z,8Z,11Z,14Z,17Z)-eicosapentaenoate + reduced [NADPH--hemoprotein reductase] + O2 = 8,9-epoxy-(5Z,11Z,14Z,17Z)-eicosatetraenoate + oxidized [NADPH--hemoprotein reductase] + H2O + H(+). The catalysed reaction is (5Z,8Z,11Z,14Z,17Z)-eicosapentaenoate + reduced [NADPH--hemoprotein reductase] + O2 = 11,12-epoxy-(5Z,8Z,14Z,17Z)-eicosatetraenoate + oxidized [NADPH--hemoprotein reductase] + H2O + H(+). It carries out the reaction (5Z,8Z,11Z,14Z,17Z)-eicosapentaenoate + reduced [NADPH--hemoprotein reductase] + O2 = 14,15-epoxy-(5Z,8Z,11Z,17Z)-eicosatetraenoate + oxidized [NADPH--hemoprotein reductase] + H2O + H(+). The enzyme catalyses (5Z,8Z,11Z,14Z,17Z)-eicosapentaenoate + reduced [NADPH--hemoprotein reductase] + O2 = (17R,18S)-epoxy-(5Z,8Z,11Z,14Z)-eicosatetraenoate + oxidized [NADPH--hemoprotein reductase] + H2O + H(+). It catalyses the reaction (5Z,8Z,11Z,14Z,17Z)-eicosapentaenoate + reduced [NADPH--hemoprotein reductase] + O2 = (17S,18R)-epoxy-(5Z,8Z,11Z,14Z)-eicosatetraenoate + oxidized [NADPH--hemoprotein reductase] + H2O + H(+). The catalysed reaction is 20-hydroxy-(5Z,8Z,11Z,14Z)-eicosatetraenoate + reduced [NADPH--hemoprotein reductase] + O2 = 20-hydroxy-8,9-epoxy-(5Z,11Z,14Z)-eicosatrienoate + oxidized [NADPH--hemoprotein reductase] + H2O + H(+). The protein operates within lipid metabolism; arachidonate metabolism. A cytochrome P450 monooxygenase involved in polyunsaturated fatty acids (PUFAs) metabolism and signaling. Catalyzes preferentially the epoxidation of double bonds of PUFAs. Converts arachidonic acid (ARA, C20:4(n-6)) primarily to stereospecific products 8R,9S-, 11R,12S-, and 14S,15R-EET. Plays a major role in the formation of EETs and hydroxy-EETs (HEETs) in kidney. Via EETs may inhibit the epithelial sodium channels (ENaCs) in nephron segments, preventing excessive sodium absorption during high dietary salt intake. Participates in the formation of anti-inflammatory hydroxyepoxyeicosatrienoic acids (HEETs) by converting 20-hydroxyeicosatetraenoic acid (20-HETE) to 20,8,9-HEET, an activator of PPARA. Metabolizes eicosapentaenoic acid (EPA, C20:5(n-3)) to epoxyeicosatetraenoic acid (EETeTr) regioisomers, 8,9-, 11,12-, 14,15-, and 17,18-EETeTr, preferentially producing 17R,18S enantiomer. Mechanistically, uses molecular oxygen inserting one oxygen atom into a substrate, and reducing the second into a water molecule, with two electrons provided by NADPH via cytochrome P450 reductase (NADPH--hemoprotein reductase). This is Cytochrome P450 2C23 from Rattus norvegicus (Rat).